Here is a 263-residue protein sequence, read N- to C-terminus: 4-hydroxy-tetrahydrodipicolinate reductase (263 aa).

10-15 (GASGKM) serves as a coordination point for NAD(+). R38 provides a ligand contact to NADP(+). NAD(+) is bound by residues 97 to 99 (GTT) and 123 to 126 (APNF). H153 functions as the Proton donor/acceptor in the catalytic mechanism. H154 is a binding site for (S)-2,3,4,5-tetrahydrodipicolinate. The active-site Proton donor is K157. 163–164 (GT) contacts (S)-2,3,4,5-tetrahydrodipicolinate.

The protein belongs to the DapB family.

The protein localises to the cytoplasm. The enzyme catalyses (S)-2,3,4,5-tetrahydrodipicolinate + NAD(+) + H2O = (2S,4S)-4-hydroxy-2,3,4,5-tetrahydrodipicolinate + NADH + H(+). The catalysed reaction is (S)-2,3,4,5-tetrahydrodipicolinate + NADP(+) + H2O = (2S,4S)-4-hydroxy-2,3,4,5-tetrahydrodipicolinate + NADPH + H(+). It functions in the pathway amino-acid biosynthesis; L-lysine biosynthesis via DAP pathway; (S)-tetrahydrodipicolinate from L-aspartate: step 4/4. In terms of biological role, catalyzes the conversion of 4-hydroxy-tetrahydrodipicolinate (HTPA) to tetrahydrodipicolinate. This chain is 4-hydroxy-tetrahydrodipicolinate reductase, found in Dehalococcoides mccartyi (strain CBDB1).